The following is a 79-amino-acid chain: uncharacterized protein (79 aa).

Residues 1 to 24 (MNKFLNLIGLAFVLVLCAFSCSNA) form the signal peptide. Residues 32-78 (SWHVAQKGYTCYDMATSCKVTLDQFMRTNKLDNNACKLVQIGRKYCC) enclose the LysM domain.

It is found in the secreted. This is an uncharacterized protein from Dictyostelium discoideum (Social amoeba).